Reading from the N-terminus, the 91-residue chain is RNA-binding protein Hfq (91 aa).

The Sm domain occupies 9 to 69 (DRFLNMLRTG…ISTIMPSSFV (61 aa)).

Belongs to the Hfq family. In terms of assembly, homohexamer.

Its function is as follows. RNA chaperone that binds small regulatory RNA (sRNAs) and mRNAs to facilitate mRNA translational regulation in response to envelope stress, environmental stress and changes in metabolite concentrations. Also binds with high specificity to tRNAs. The protein is RNA-binding protein Hfq of Pseudothermotoga lettingae (strain ATCC BAA-301 / DSM 14385 / NBRC 107922 / TMO) (Thermotoga lettingae).